The sequence spans 449 residues: Gallate transporter (449 aa).

12 helical membrane-spanning segments follow: residues 26-46 (WLILVLCFLIVLFDGFDVAVM), 62-82 (AAFGPVMSAGMVGLAIGALTA), 92-112 (KKVLLIAVSGFSLLSLACAFA), 123-143 (LLTGIALGAAMPNCTTLLAEY), 155-175 (IMFTGFNMGSGLGGFLSAWLI), 183-203 (VLLAGGLLPLALLPLLWWLLP), 262-282 (LALWLTYFMGLLVIYLTMGWL), 298-318 (TITGLFQIGGAVGAIVVGWIM), 326-346 (VIAIAYALGGLCIVSLGALSL), 349-369 (SLLVVGVAAAGFCMSGAQTAL), 388-408 (WMLGIGRFGAIFGSLIGGAVL), and 414-434 (LPLLFTLLGLPAFAAALAILA).

This sequence belongs to the major facilitator superfamily. Sugar transporter (TC 2.A.1.1) family.

Its subcellular location is the membrane. In terms of biological role, transporter that specifically mediates the uptake of gallate. The chain is Gallate transporter (galT) from Pseudomonas putida (Arthrobacter siderocapsulatus).